The chain runs to 261 residues: Cytochrome c oxidase subunit 3 (261 aa).

Topologically, residues 1-15 (MTHQTHAYHMVNPSP) are mitochondrial matrix. Residues 16–34 (WPLTGALSALLMTFGLIMW) traverse the membrane as a helical segment. Topologically, residues 35–40 (FHFNST) are mitochondrial intermembrane. Residues 41–66 (ALLMLGLTTNMLTMYQWWRDIIREST) form a helical membrane-spanning segment. Over 67-72 (FQGHHT) the chain is Mitochondrial matrix. A helical membrane pass occupies residues 73–105 (PVVQKGLRYGMILFIISEVLFFTGFFWAFYHSS). At 106–128 (LAPTPELGGCWPPTGIHPLNPLE) the chain is on the mitochondrial intermembrane side. Residues 129–152 (VPLLNTSVLLASGVSITWAHHSLM) traverse the membrane as a helical segment. Topologically, residues 153–155 (EGH) are mitochondrial matrix. Residues 156–183 (RNHMLQALFITIALGVYFTLLQASEYYE) traverse the membrane as a helical segment. At 184 to 190 (APFTISD) the chain is on the mitochondrial intermembrane side. A helical membrane pass occupies residues 191–223 (GVYGSTFFVATGFHGLHVIIGSTFLIVCFFRQL). Over 224 to 232 (KFHFTSSHH) the chain is Mitochondrial matrix. Residues 233–256 (FGFEAAAWYWHFVDVVWLFLYVSI) traverse the membrane as a helical segment. Residues 257–261 (YWWGS) are Mitochondrial intermembrane-facing.

The protein belongs to the cytochrome c oxidase subunit 3 family. In terms of assembly, component of the cytochrome c oxidase (complex IV, CIV), a multisubunit enzyme composed of 14 subunits. The complex is composed of a catalytic core of 3 subunits MT-CO1, MT-CO2 and MT-CO3, encoded in the mitochondrial DNA, and 11 supernumerary subunits COX4I, COX5A, COX5B, COX6A, COX6B, COX6C, COX7A, COX7B, COX7C, COX8 and NDUFA4, which are encoded in the nuclear genome. The complex exists as a monomer or a dimer and forms supercomplexes (SCs) in the inner mitochondrial membrane with NADH-ubiquinone oxidoreductase (complex I, CI) and ubiquinol-cytochrome c oxidoreductase (cytochrome b-c1 complex, complex III, CIII), resulting in different assemblies (supercomplex SCI(1)III(2)IV(1) and megacomplex MCI(2)III(2)IV(2)).

The protein resides in the mitochondrion inner membrane. The enzyme catalyses 4 Fe(II)-[cytochrome c] + O2 + 8 H(+)(in) = 4 Fe(III)-[cytochrome c] + 2 H2O + 4 H(+)(out). In terms of biological role, component of the cytochrome c oxidase, the last enzyme in the mitochondrial electron transport chain which drives oxidative phosphorylation. The respiratory chain contains 3 multisubunit complexes succinate dehydrogenase (complex II, CII), ubiquinol-cytochrome c oxidoreductase (cytochrome b-c1 complex, complex III, CIII) and cytochrome c oxidase (complex IV, CIV), that cooperate to transfer electrons derived from NADH and succinate to molecular oxygen, creating an electrochemical gradient over the inner membrane that drives transmembrane transport and the ATP synthase. Cytochrome c oxidase is the component of the respiratory chain that catalyzes the reduction of oxygen to water. Electrons originating from reduced cytochrome c in the intermembrane space (IMS) are transferred via the dinuclear copper A center (CU(A)) of subunit 2 and heme A of subunit 1 to the active site in subunit 1, a binuclear center (BNC) formed by heme A3 and copper B (CU(B)). The BNC reduces molecular oxygen to 2 water molecules using 4 electrons from cytochrome c in the IMS and 4 protons from the mitochondrial matrix. The sequence is that of Cytochrome c oxidase subunit 3 (MT-CO3) from Tragelaphus oryx (Eland).